A 438-amino-acid chain; its full sequence is Transposon Ty2-LR2 Gag polyprotein (438 aa).

Composition is skewed to polar residues over residues 1–11 (MESQQLHQNPH), 19–39 (ASVT…SASN), and 49–60 (KVNSQEETTPGT). Disordered regions lie at residues 1 to 88 (MESQ…YQQH), 364 to 397 (KNVS…AKAH), and 418 to 438 (VSSQ…TERI). Residues 295–397 (ENNINVSDRL…SSKPRAAKAH (103 aa)) form an RNA-binding region. Over residues 369–381 (TSPNTTNTKVTTR) the composition is skewed to low complexity.

In terms of assembly, homotrimer.

Its subcellular location is the cytoplasm. Capsid protein (CA) is the structural component of the virus-like particle (VLP), forming the shell that encapsulates the retrotransposons dimeric RNA genome. The particles are assembled from trimer-clustered units and there are holes in the capsid shells that allow for the diffusion of macromolecules. CA also has nucleocapsid-like chaperone activity, promoting primer tRNA(i)-Met annealing to the multipartite primer-binding site (PBS), dimerization of Ty2 RNA and initiation of reverse transcription. This Saccharomyces cerevisiae (strain ATCC 204508 / S288c) (Baker's yeast) protein is Transposon Ty2-LR2 Gag polyprotein (TY2A-LR2).